A 909-amino-acid polypeptide reads, in one-letter code: Epithelial discoidin domain-containing receptor 1 (909 aa).

The signal sequence occupies residues 1 to 18 (MGPEALSSLLLLLLVASG). The Extracellular segment spans residues 21–413 (DMKGHFDPAK…VAKAEGSPTA (393 aa)). One can recognise an F5/8 type C domain in the interval 31-181 (CRYALGMQDR…VCLRVELYGC (151 aa)). 2 cysteine pairs are disulfide-bonded: cysteine 31/cysteine 181 and cysteine 70/cysteine 173. A compositionally biased stretch (low complexity) spans 45-60 (SDISASSSWSDSTAAR). The interval 45–65 (SDISASSSWSDSTAARHSSDG) is disordered. Residues 188 to 363 (LSYTAPVGQT…LFSEISFISD (176 aa)) form a DS-like domain region. The Ca(2+) site is built by asparagine 207, glutamine 226, aspartate 229, valine 231, tyrosine 249, and tyrosine 251. An N-linked (GlcNAc...) asparagine glycan is attached at asparagine 207. A glycan (N-linked (GlcNAc...) asparagine) is linked at asparagine 256. A disulfide bond links cysteine 299 and cysteine 344. Ca(2+)-binding residues include serine 356 and glutamate 357. N-linked (GlcNAc...) asparagine glycans are attached at residues asparagine 366 and asparagine 390. The chain crosses the membrane as a helical span at residues 414-434 (ILIGCLVAIILLLLLIIALML). Residues 435–909 (WRLHWRRLLS…FLAEDALNTV (475 aa)) are Cytoplasmic-facing. The interval 466–495 (ILINNRPGPREPPPYQEPRPRGNPPHSAPC) is disordered. Pro residues predominate over residues 475–492 (REPPPYQEPRPRGNPPHS). A PPxY motif motif is present at residues 477-480 (PPPY). Tyrosine 480, tyrosine 509, and tyrosine 516 each carry phosphotyrosine; by autocatalysis. The 296-residue stretch at 606–901 (LRFKEKLGEG…PPFSQLHRFL (296 aa)) folds into the Protein kinase domain. Residue 612 to 620 (LGEGQFGEV) participates in ATP binding. Position 627 is a phosphoserine (serine 627). Lysine 651 provides a ligand contact to ATP. Tyrosine 736 is modified (phosphotyrosine; by autocatalysis). The active-site Proton acceptor is aspartate 762. 3 positions are modified to phosphotyrosine; by autocatalysis: tyrosine 788, tyrosine 792, and tyrosine 793.

It belongs to the protein kinase superfamily. Tyr protein kinase family. Insulin receptor subfamily. As to quaternary structure, homodimer. Interacts (via PPxY motif) with WWC1 (via WW domains) in a collagen-regulated manner. Forms a tripartite complex with WWC1 and PRKCZ, but predominantly in the absence of collagen. Interacts (tyrosine phosphorylated) with SHC1. Interacts with SRC. Interacts with MYH9. Interacts with CDH1. Interacts with PTPN11. Interacts with NCK2. Autophosphorylated in response to fibrillar collagen binding.

The protein resides in the cell membrane. The catalysed reaction is L-tyrosyl-[protein] + ATP = O-phospho-L-tyrosyl-[protein] + ADP + H(+). Tyrosine kinase that functions as a cell surface receptor for fibrillar collagen and regulates cell attachment to the extracellular matrix, remodeling of the extracellular matrix, cell migration, differentiation, survival and cell proliferation. Collagen binding triggers a signaling pathway that involves SRC and leads to the activation of MAP kinases. Regulates remodeling of the extracellular matrix by up-regulation of the matrix metalloproteinases MMP2, MMP7 and MMP9, and thereby facilitates cell migration and wound healing. Promotes smooth muscle cell migration, and thereby contributes to arterial wound healing. Also plays a role in tumor cell invasion. Phosphorylates PTPN11. Required for normal blastocyst implantation during pregnancy, for normal mammary gland differentiation and normal lactation. Required for normal ear morphology and normal hearing. The polypeptide is Epithelial discoidin domain-containing receptor 1 (DDR1) (Pan troglodytes (Chimpanzee)).